We begin with the raw amino-acid sequence, 216 residues long: Elongation factor Ts (216 aa).

The involved in Mg(2+) ion dislocation from EF-Tu stretch occupies residues 80–83 (TDFV).

The protein belongs to the EF-Ts family.

The protein localises to the cytoplasm. Functionally, associates with the EF-Tu.GDP complex and induces the exchange of GDP to GTP. It remains bound to the aminoacyl-tRNA.EF-Tu.GTP complex up to the GTP hydrolysis stage on the ribosome. The chain is Elongation factor Ts from Alkaliphilus oremlandii (strain OhILAs) (Clostridium oremlandii (strain OhILAs)).